Consider the following 411-residue polypeptide: Serine hydroxymethyltransferase (411 aa).

(6S)-5,6,7,8-tetrahydrofolate-binding positions include L119 and 123-125 (GHL). K228 carries the post-translational modification N6-(pyridoxal phosphate)lysine. 351 to 353 (SPF) provides a ligand contact to (6S)-5,6,7,8-tetrahydrofolate.

It belongs to the SHMT family. In terms of assembly, homodimer. Requires pyridoxal 5'-phosphate as cofactor.

It localises to the cytoplasm. The enzyme catalyses (6R)-5,10-methylene-5,6,7,8-tetrahydrofolate + glycine + H2O = (6S)-5,6,7,8-tetrahydrofolate + L-serine. Its pathway is one-carbon metabolism; tetrahydrofolate interconversion. It participates in amino-acid biosynthesis; glycine biosynthesis; glycine from L-serine: step 1/1. Catalyzes the reversible interconversion of serine and glycine with tetrahydrofolate (THF) serving as the one-carbon carrier. This reaction serves as the major source of one-carbon groups required for the biosynthesis of purines, thymidylate, methionine, and other important biomolecules. Also exhibits THF-independent aldolase activity toward beta-hydroxyamino acids, producing glycine and aldehydes, via a retro-aldol mechanism. This Clostridium botulinum (strain Alaska E43 / Type E3) protein is Serine hydroxymethyltransferase.